The chain runs to 456 residues: Putative F-box/FBD/LRR-repeat protein At1g66300 (456 aa).

The interval methionine 1–lysine 23 is disordered. Positions valine 28–aspartate 74 constitute an F-box domain. LRR repeat units follow at residues histidine 136–glycine 163, valine 185–arginine 210, proline 234–histidine 260, and phenylalanine 347–serine 372. The FBD domain occupies methionine 377–leucine 429.

The sequence is that of Putative F-box/FBD/LRR-repeat protein At1g66300 from Arabidopsis thaliana (Mouse-ear cress).